The primary structure comprises 514 residues: RNA-binding region-containing protein 3 (514 aa).

The disordered stretch occupies residues 1-26 (MAGPEPPMPLSRGGPGSASLSPPRGD). Serine 21 carries the post-translational modification Phosphoserine. The RRM 1 domain maps to 27 to 102 (RTLLVRHLPA…HTLVVEFAKE (76 aa)). Disordered stretches follow at residues 106-133 (VHSPCSTSNTEKKKRLDDTVENDKEKKE), 213-282 (MPLH…VRKK), and 337-363 (ETQPNNEEENSDSPDTGLDSNTGFGKI). Residue serine 108 is modified to Phosphoserine. Residues 115–133 (TEKKKRLDDTVENDKEKKE) are compositionally biased toward basic and acidic residues. A compositionally biased stretch (pro residues) spans 217–230 (APLPPTSPQPPEEP). Position 349 is a phosphoserine (serine 349). In terms of domain architecture, RRM 2 spans 418 to 501 (CRIYVKNLAR…KPMVVQFARS (84 aa)).

As to quaternary structure, component of the U11/U12 snRNPs that are part of the U12-type spliceosome. Found in a complex with m(7)G-capped U12 snRNA. Interacts with PDCD7.

The protein localises to the nucleus. Participates in pre-mRNA U12-dependent splicing, performed by the minor spliceosome which removes U12-type introns. U12-type introns comprises less than 1% of all non-coding sequences. Binds to the 3'-stem-loop of m(7)G-capped U12 snRNA. The protein is RNA-binding region-containing protein 3 (Rnpc3) of Mus musculus (Mouse).